Consider the following 1760-residue polypeptide: Chitin synthase csmB (1760 aa).

Over residues M1–S17 the composition is skewed to low complexity. Residues M1–P23 are disordered. Residues M1–P374 enclose the Myosin motor domain. An N-linked (GlcNAc...) asparagine glycan is attached at N275. Residues L344–D363 are disordered. P374 is a region of interest (actin-binding). A run of 2 helical transmembrane segments spans residues I731–I751 and L767–F787. Residues N878, N906, and N995 are each glycosylated (N-linked (GlcNAc...) asparagine). A helical membrane pass occupies residues I1029–L1049. The N-linked (GlcNAc...) asparagine glycan is linked to N1394. Helical transmembrane passes span F1419–G1439, F1452–L1472, and I1480–Y1500. Residues N1584 and N1652 are each glycosylated (N-linked (GlcNAc...) asparagine). The 57-residue stretch at G1702 to A1758 folds into the DEK-C domain.

It in the N-terminal section; belongs to the TRAFAC class myosin-kinesin ATPase superfamily. Myosin family. The protein in the C-terminal section; belongs to the chitin synthase family. Class V subfamily.

It is found in the cell membrane. The protein localises to the cell septum. The protein resides in the cell tip. The enzyme catalyses [(1-&gt;4)-N-acetyl-beta-D-glucosaminyl](n) + UDP-N-acetyl-alpha-D-glucosamine = [(1-&gt;4)-N-acetyl-beta-D-glucosaminyl](n+1) + UDP + H(+). In terms of biological role, polymerizes chitin, a structural polymer of the cell wall and septum, by transferring the sugar moiety of UDP-GlcNAc to the non-reducing end of the growing chitin polymer. Plays an important role in septal growth or maintenance. Mediates colony spore formation. The polypeptide is Chitin synthase csmB (Aspergillus niger (strain ATCC MYA-4892 / CBS 513.88 / FGSC A1513)).